The sequence spans 1050 residues: MVKLSIVLTPQFLSHDQGQLTKELQQHVKSVTCPCEYLRKVINTLADHHHRGTDFGGSPWLHVIIAFPTSYKVVITLWIVYLWVSLLKTIFWSRNGHDGSTDVQQRAWRSNRRRQEGLRSICMHTKKRVSSFRGNKIGLKDVITLRRHVETKVRAKIRKRKVTTKINHHDKINGKRKTARKQKMFQRAQELRRRAEDYHKCKIPPSARKALCNWVRMAAAEHRHSSGLPYWPYLTAETLKNRMGHQPPPPTQQHSITDNSLSLKTPPECLLTPLPPSADDNLKTPPECVLTPLPPSADDNLKTPPECVLTPLPPSADDNLKTPPECLLTPLPPSADDNLKTPPECLLTPLPPSALPSAPPSADDNLKTRAECLLHPLPPSADDNLKTPSERQLTPLPPSAPPSADDNIKTPAERLRGPLPPSADDNLKTPSERQLTPLPPSAPPSADDNIKTPAERLRGPLPPSADDNLKTPSERQLTPLPPSAPPSADDNIKTPAERLRGPLPPSADDNLKTPSERQLTALPPSADDNIKTPAERLRGPLPPSADDNLKTPSERQLTPLPPSAPPSADDNIKTPAFHPQRMIISRHLPSVSSLPFHPQLHPQQMIISRHLPSVCGGRFHPQQMIISRHLPSVSSLPFHPQLHPQQMIISRHLPSVCGGRFHPQRMIISRHLPSVSSLPFHPQLHPQQMIISRHLPSVCGGRFHPQQMIISRHLPSVSSLPFHPQLHPQQMIISRHLPSVCGGRFHPQRMIISRHLPSVSSLPFHPQLHPQQMIISRHLPSVCGERLRGPLPPSADDNLKTPSERQLTPLPPSAPPSADDNIKTPAERLRGPLPPSADDNLKTPSERQLTPLPPSAPPSADDNIKTPAERLRGPLPPSADDNLKTPSERQLTPLPPSAPPSADDNIKTPAERLRGPLPPSADDNLKTPPLATQEAEAEKPRKPKRQRAAEMEPPPEPKRRRVGDVEPSRKPKRRRAADVEPSSPEPKRRRVGDVEPSRKPKRRRAADVEPSSPEPKRRRVGDVEPSRKPKRRRAADVEPSLPEPKRRRLS.

A helical membrane pass occupies residues 63 to 87 (VIIAFPTSYKVVITLWIVYLWVSLL). Disordered stretches follow at residues 241 to 262 (NRMG…NSLS), 290 to 574 (LTPL…NIKT), and 785 to 1050 (ERLR…RRLS). Positions 252 to 262 (QQHSITDNSLS) are enriched in polar residues. A compositionally biased stretch (pro residues) spans 349-359 (PLPPSALPSAP). Composition is skewed to basic and acidic residues over residues 406 to 416 (DNIKTPAERLR), 448 to 458 (DNIKTPAERLR), 490 to 500 (DNIKTPAERLR), 528 to 538 (DNIKTPAERLR), 820 to 830 (DNIKTPAERLR), 862 to 872 (DNIKTPAERLR), and 904 to 914 (DNIKTPAERLR).

The protein belongs to the NPIP family.

It localises to the membrane. The chain is Nuclear pore complex-interacting protein family member B3 (NPIPB3) from Homo sapiens (Human).